A 236-amino-acid polypeptide reads, in one-letter code: Phosphoglycolate phosphatase (236 aa).

Residue Asp14 is the Nucleophile of the active site. The Mg(2+) site is built by Asp14, Asp16, and Asp177.

The protein belongs to the HAD-like hydrolase superfamily. CbbY/CbbZ/Gph/YieH family. Requires Mg(2+) as cofactor.

The enzyme catalyses 2-phosphoglycolate + H2O = glycolate + phosphate. It participates in organic acid metabolism; glycolate biosynthesis; glycolate from 2-phosphoglycolate: step 1/1. Functionally, specifically catalyzes the dephosphorylation of 2-phosphoglycolate. Is involved in the dissimilation of the intracellular 2-phosphoglycolate formed during the DNA repair of 3'-phosphoglycolate ends, a major class of DNA lesions induced by oxidative stress. This chain is Phosphoglycolate phosphatase, found in Neisseria gonorrhoeae (strain ATCC 700825 / FA 1090).